The following is a 165-amino-acid chain: Nucleotide-binding protein Rcas_1283 (165 aa).

Belongs to the YajQ family.

Its function is as follows. Nucleotide-binding protein. This is Nucleotide-binding protein Rcas_1283 from Roseiflexus castenholzii (strain DSM 13941 / HLO8).